The primary structure comprises 39 residues: Potassium channel toxin alpha-KTx 2.24 (39 aa).

Cystine bridges form between C7-C29, C13-C34, and C17-C36.

The protein belongs to the short scorpion toxin superfamily. Potassium channel inhibitor family. Alpha-KTx 02 subfamily. As to expression, expressed by the venom gland.

Its subcellular location is the secreted. Blocks human voltage-gated potassium (Kv) channels Kv1.1/KCNA, Kv1.2/KCNA2 and Kv1.3/KCNA3. Exhibits high affinity for Kv1.2/KCNA2 and selectivity over Kv1.1/KCNA and Kv1.3/KCNA3. The polypeptide is Potassium channel toxin alpha-KTx 2.24 (Centruroides bonito (Scorpion)).